A 194-amino-acid chain; its full sequence is Ras-related protein Rab-22A (194 aa).

12–20 (GDTGVGKSS) contributes to the GTP binding site. An Effector region motif is present at residues 34-42 (INPTIGASF). Residues 60-64 (DTAGQ), 118-121 (NKCD), and 148-150 (SAK) contribute to the GTP site. The disordered stretch occupies residues 170-194 (DANPASGGKGFKLRRQPSEPKRSCC). Residues 185-194 (QPSEPKRSCC) show a composition bias toward basic and acidic residues. 2 S-geranylgeranyl cysteine lipidation sites follow: Cys-193 and Cys-194.

It belongs to the small GTPase superfamily. Rab family. As to quaternary structure, binds EEA1. Interacts (in its GTP-bound form) with RINL. Interacts directly with ZFYVE20. Interacts (in its GTP-bound form) with RABGEF1. Detected in brain and heart, and at lower levels in lung and spleen.

Its subcellular location is the endosome membrane. The protein resides in the cell membrane. It is found in the early endosome. It localises to the late endosome. The protein localises to the cell projection. Its subcellular location is the ruffle. The protein resides in the cytoplasmic vesicle. It is found in the phagosome. It localises to the phagosome membrane. Functionally, plays a role in endocytosis and intracellular protein transport. Mediates trafficking of TF from early endosomes to recycling endosomes. Required for NGF-mediated endocytosis of NTRK1, and subsequent neurite outgrowth. Binds GTP and GDP and has low GTPase activity. Alternates between a GTP-bound active form and a GDP-bound inactive form. This is Ras-related protein Rab-22A (Rab22a) from Mus musculus (Mouse).